We begin with the raw amino-acid sequence, 209 residues long: Uracil phosphoribosyltransferase (209 aa).

5-phospho-alpha-D-ribose 1-diphosphate-binding positions include arginine 79, arginine 104, and 131-139; that span reads DPMLATGAS. Uracil-binding positions include isoleucine 194 and 199 to 201; that span reads GDA. Aspartate 200 is a binding site for 5-phospho-alpha-D-ribose 1-diphosphate.

Belongs to the UPRTase family. Mg(2+) serves as cofactor.

The catalysed reaction is UMP + diphosphate = 5-phospho-alpha-D-ribose 1-diphosphate + uracil. Its pathway is pyrimidine metabolism; UMP biosynthesis via salvage pathway; UMP from uracil: step 1/1. Its activity is regulated as follows. Allosterically activated by GTP. In terms of biological role, catalyzes the conversion of uracil and 5-phospho-alpha-D-ribose 1-diphosphate (PRPP) to UMP and diphosphate. This Staphylococcus carnosus (strain TM300) protein is Uracil phosphoribosyltransferase.